The primary structure comprises 411 residues: MAATAGATPSSHLLLSSSRHVAASPQPRILFPSLSGKRVAVGKNHHATGVRCMAVAADATAETKPAAKKKSGYELQTLTSWLLRQEMKGEIDTELTIVMSSIAMACKQIASLVQRAGISNLTGVQGAVNIQGEDQKKLDVVSNEVFSNCLRSSGRTGIIASEEEDVPVAVEESYSGNYVVVFDPLDGSSNIDAAVSTGSIFGIYSPNDECLPDSDDTSALGSEEERCIVNVCQPGNNLLAAGYCMYSSSVIFVLTLGKGVFAFTLDPMYGEFVLTQENIEIPKAGKIYSFNEGNYQMWDENLKKYIDDLKDPGPSGKPYSARYIGSLVGDFHRTLLYGGIYGYPRDAKSKNGKLRLLYECAPMSFIVEQAGGKGSDGHHRVLDIQPTEIHQRVPLYIGSKEEVEKLEKYLA.

Residues 1-53 constitute a chloroplast transit peptide; sequence MAATAGATPSSHLLLSSSRHVAASPQPRILFPSLSGKRVAVGKNHHATGVRCM. 5 residues coordinate Mg(2+): E133, E162, D183, L185, and D186. 186–189 is a binding site for substrate; sequence DGSS. Residues C227 and C232 are joined by a disulfide bond. Residues N291, Y323, Y341, Y343, and K353 each contribute to the substrate site. E359 contacts Mg(2+).

It belongs to the FBPase class 1 family. Homotetramer. Mg(2+) serves as cofactor.

Its subcellular location is the plastid. The protein localises to the chloroplast stroma. The enzyme catalyses beta-D-fructose 1,6-bisphosphate + H2O = beta-D-fructose 6-phosphate + phosphate. It functions in the pathway carbohydrate biosynthesis; Calvin cycle. This chain is Fructose-1,6-bisphosphatase, chloroplastic (FBP), found in Brassica napus (Rape).